Reading from the N-terminus, the 284-residue chain is Bifunctional protein FolD (284 aa).

Residues glycine 166–serine 168 and isoleucine 232 contribute to the NADP(+) site.

Belongs to the tetrahydrofolate dehydrogenase/cyclohydrolase family. Homodimer.

It catalyses the reaction (6R)-5,10-methylene-5,6,7,8-tetrahydrofolate + NADP(+) = (6R)-5,10-methenyltetrahydrofolate + NADPH. The enzyme catalyses (6R)-5,10-methenyltetrahydrofolate + H2O = (6R)-10-formyltetrahydrofolate + H(+). It functions in the pathway one-carbon metabolism; tetrahydrofolate interconversion. Catalyzes the oxidation of 5,10-methylenetetrahydrofolate to 5,10-methenyltetrahydrofolate and then the hydrolysis of 5,10-methenyltetrahydrofolate to 10-formyltetrahydrofolate. The sequence is that of Bifunctional protein FolD from Pseudomonas putida (strain W619).